The sequence spans 102 residues: Large ribosomal subunit protein bL21 (102 aa).

This sequence belongs to the bacterial ribosomal protein bL21 family. As to quaternary structure, part of the 50S ribosomal subunit. Contacts protein L20.

In terms of biological role, this protein binds to 23S rRNA in the presence of protein L20. This chain is Large ribosomal subunit protein bL21, found in Limosilactobacillus fermentum (strain NBRC 3956 / LMG 18251) (Lactobacillus fermentum).